The chain runs to 150 residues: 3-dehydroquinate dehydratase (150 aa).

The active-site Proton acceptor is Tyr26. 3 residues coordinate substrate: Asn77, His83, and Asp90. His103 (proton donor) is an active-site residue. Residues 104 to 105 and Arg114 contribute to the substrate site; that span reads LS.

This sequence belongs to the type-II 3-dehydroquinase family. As to quaternary structure, homododecamer.

It carries out the reaction 3-dehydroquinate = 3-dehydroshikimate + H2O. The protein operates within metabolic intermediate biosynthesis; chorismate biosynthesis; chorismate from D-erythrose 4-phosphate and phosphoenolpyruvate: step 3/7. Catalyzes a trans-dehydration via an enolate intermediate. This Pectobacterium atrosepticum (strain SCRI 1043 / ATCC BAA-672) (Erwinia carotovora subsp. atroseptica) protein is 3-dehydroquinate dehydratase.